We begin with the raw amino-acid sequence, 875 residues long: Alanine--tRNA ligase (875 aa).

His564, His568, Cys666, and His670 together coordinate Zn(2+).

It belongs to the class-II aminoacyl-tRNA synthetase family. Homotetramer. Zn(2+) is required as a cofactor.

The protein resides in the cytoplasm. It catalyses the reaction tRNA(Ala) + L-alanine + ATP = L-alanyl-tRNA(Ala) + AMP + diphosphate. Functionally, catalyzes the attachment of alanine to tRNA(Ala) in a two-step reaction: alanine is first activated by ATP to form Ala-AMP and then transferred to the acceptor end of tRNA(Ala). Also edits incorrectly charged Ser-tRNA(Ala) and Gly-tRNA(Ala) via its editing domain. In Yersinia pseudotuberculosis serotype IB (strain PB1/+), this protein is Alanine--tRNA ligase.